A 316-amino-acid chain; its full sequence is Methionyl-tRNA formyltransferase (316 aa).

112–115 (SLLP) lines the (6S)-5,6,7,8-tetrahydrofolate pocket.

This sequence belongs to the Fmt family.

It catalyses the reaction L-methionyl-tRNA(fMet) + (6R)-10-formyltetrahydrofolate = N-formyl-L-methionyl-tRNA(fMet) + (6S)-5,6,7,8-tetrahydrofolate + H(+). In terms of biological role, attaches a formyl group to the free amino group of methionyl-tRNA(fMet). The formyl group appears to play a dual role in the initiator identity of N-formylmethionyl-tRNA by promoting its recognition by IF2 and preventing the misappropriation of this tRNA by the elongation apparatus. In Flavobacterium psychrophilum (strain ATCC 49511 / DSM 21280 / CIP 103535 / JIP02/86), this protein is Methionyl-tRNA formyltransferase.